The sequence spans 145 residues: Selenoprotein M (145 aa).

Positions 1 to 23 are cleaved as a signal peptide; it reads MSILLSPPSLLLLLAALVAPATS. Active-site nucleophile residues include cysteine 45 and selenocysteine 48. A cross-link (cysteinyl-selenocysteine (Cys-Sec)) is located at residues 45-48; that stretch reads CGGU. Position 48 (selenocysteine 48) is a non-standard amino acid, selenocysteine. The segment at 125–145 is disordered; the sequence is PPEYLWAPAKPPEEASEHDDL.

Belongs to the selenoprotein M/F family. As to expression, widely expressed. Highly expressed in brain.

Its subcellular location is the cytoplasm. The protein localises to the perinuclear region. It is found in the endoplasmic reticulum. It localises to the golgi apparatus. In terms of biological role, may function as a thiol-disulfide oxidoreductase that participates in disulfide bond formation. This is Selenoprotein M from Mus musculus (Mouse).